The following is a 223-amino-acid chain: MVRVKICGIRDWEEARMVLDAGVDTLGFVFARSPRAIKPEAAREIITKLPPFTTTVGVFVNEPRYSLMEIASFCRLDVLQLHGDEPPEYCHGLSQRLIKAIRVRDAASLASLEAYREVQGFLLDAWVPGKAGGTGTTFNWELVRGAATGGKPVILAGGLTPENVGAAIQLVHPYAVDVSSGVEVDGRKNPARIAAFLEAVRKAEEHHVRPTASSCCTGLKGDF.

The protein belongs to the TrpF family.

It carries out the reaction N-(5-phospho-beta-D-ribosyl)anthranilate = 1-(2-carboxyphenylamino)-1-deoxy-D-ribulose 5-phosphate. It functions in the pathway amino-acid biosynthesis; L-tryptophan biosynthesis; L-tryptophan from chorismate: step 3/5. This chain is N-(5'-phosphoribosyl)anthranilate isomerase, found in Moorella thermoacetica (strain ATCC 39073 / JCM 9320).